Here is a 340-residue protein sequence, read N- to C-terminus: Homeobox protein DBX2 (340 aa).

Residues 185 to 244 constitute a DNA-binding region (homeobox); it reads GILRRAVFSEDQRKALEKMFQKQKYISKTDRKKLAINLGLKESQVKIWFQNRRMKWRNSK. Positions 283–313 are disordered; sequence QQHPSPGWRENSPEPSERLIQGSPGAEALPP.

It belongs to the H2.0 homeobox family.

The protein localises to the nucleus. The protein is Homeobox protein DBX2 (DBX2) of Bos taurus (Bovine).